Consider the following 321-residue polypeptide: MATSSGSCLIISLLVVVVAAALSASTASAQLSSTFYDTSCPSAMSTISSGVNSAVAQQARVGASLLRLHFHDCFIQGCDASILLNDTSGEQTQPPNLTLNPRAFDVVNSIKAQVEAACPGVVSCADILAVAARDGVVALGGPSWTVLLGRRDSTGSFPSQTSDLPPPTSSLQALLAAYSKKNLDATDMVALSGAHTIGQAQCSSFNGHIYNDTNINAAFATSLKANCPMSGGSSLAPLDTMTPTVFGNDYYKNLLSQKGLLHSDQELFNNGSTDSTVSNFASSSAAFTSAFTAAMVKMGNLGPLTGTSGQIRLTCWKLNSS.

Positions 1 to 29 (MATSSGSCLIISLLVVVVAAALSASTASA) are cleaved as a signal peptide. Glutamine 30 carries the post-translational modification Pyrrolidone carboxylic acid. 4 disulfide bridges follow: cysteine 40-cysteine 118, cysteine 73-cysteine 78, cysteine 124-cysteine 315, and cysteine 202-cysteine 227. Histidine 71 serves as the catalytic Proton acceptor. Ca(2+)-binding residues include aspartate 72, isoleucine 75, glycine 77, aspartate 79, and serine 81. Asparagine 85 and asparagine 96 each carry an N-linked (GlcNAc...) asparagine glycan. Proline 165 lines the substrate pocket. Histidine 195 lines the heme b pocket. Residue threonine 196 participates in Ca(2+) binding. A glycan (N-linked (GlcNAc...) asparagine) is linked at asparagine 211. Positions 239, 242, and 247 each coordinate Ca(2+). Asparagine 270 carries N-linked (GlcNAc...) asparagine glycosylation.

Belongs to the peroxidase family. Classical plant (class III) peroxidase subfamily. Heme b serves as cofactor. Requires Ca(2+) as cofactor.

It localises to the secreted. The catalysed reaction is 2 a phenolic donor + H2O2 = 2 a phenolic radical donor + 2 H2O. Removal of H(2)O(2), oxidation of toxic reductants, biosynthesis and degradation of lignin, suberization, auxin catabolism, response to environmental stresses such as wounding, pathogen attack and oxidative stress. These functions might be dependent on each isozyme/isoform in each plant tissue. The chain is Peroxidase 42 (PER42) from Zea mays (Maize).